We begin with the raw amino-acid sequence, 948 residues long: 3-hydroxy-3-methylglutaryl-coenzyme A reductase (948 aa).

Transmembrane regions (helical) follow at residues 9–25 (LLFF…VLLI), 55–71 (VIIF…VLTC), 96–112 (LILF…VLFV), 124–140 (TSVF…FIVL), 207–223 (IIYI…FMRI), and 286–302 (CWST…ILHL). N316 is a glycosylation site (N-linked (GlcNAc...) asparagine). The helical transmembrane segment at 347–363 (VINANLVVYLFLGLFLF) threads the bilayer. A linker region spans residues 364-466 (KRIRLNKPIN…MLTEKIKQGL (103 aa)). N430 carries N-linked (GlcNAc...) asparagine glycosylation. The catalytic stretch occupies residues 467–948 (GHELSDTEIL…VNPEISHYTM (482 aa)). Residues E567, K699, and D777 each act as charge relay system in the active site. Residue H869 is the Proton donor of the active site. An N-linked (GlcNAc...) asparagine glycan is attached at N895.

Belongs to the HMG-CoA reductase family.

The protein resides in the endoplasmic reticulum membrane. Its subcellular location is the peroxisome membrane. The enzyme catalyses (R)-mevalonate + 2 NADP(+) + CoA = (3S)-3-hydroxy-3-methylglutaryl-CoA + 2 NADPH + 2 H(+). The protein operates within metabolic intermediate biosynthesis; (R)-mevalonate biosynthesis; (R)-mevalonate from acetyl-CoA: step 3/3. Its function is as follows. This transmembrane glycoprotein is involved in the control of cholesterol and nonsterol isoprenoid compounds biosynthesis. It is the rate-limiting enzyme of sterol biosynthesis. The protein is 3-hydroxy-3-methylglutaryl-coenzyme A reductase of Schistosoma mansoni (Blood fluke).